Consider the following 213-residue polypeptide: Protein Syd (213 aa).

Belongs to the Syd family.

It is found in the cell inner membrane. Functionally, interacts with the SecY protein in vivo. May bind preferentially to an uncomplexed state of SecY, thus functioning either as a chelating agent for excess SecY in the cell or as a regulatory factor that negatively controls the translocase function. In Shewanella halifaxensis (strain HAW-EB4), this protein is Protein Syd.